Consider the following 674-residue polypeptide: MDKAKAQQEIGKLRAEIERHNRLYYLEAKPEISDFEFDKLLKRLIMLEKEFPELVTPDSPSQRVGGGITKEFPTVVHRDPMLSLSNTYSIAEVADFCNRVEKLVAAEGGGTPEYVAELKYDGVAISLLYRDGLLVCGSTRGDGRQGDEITANLRTIPSIPLRLEMPDLPLFGTALSGEIEVRGEVYMRKDDFERLNEERPEEERFANPRNATAGTLKLQDSAEVARRRMSFVAYYLKGYDGEAPTHLKRLEQLKSMGFMTGAAAKLCKGMDEIADFIAEWSEKRWTLPYETDGVVLKLNEVSLWERLGATAKSPRWAIAYKYPAQQAKTVLQGVVFQVGRLGTITPVAELKPTRLAGSIVSRSTLHNFDEIKRLGVRIGDHVMIEKSGEVIPKVVSVVLDERPAETAEIEVPSECPVCGTRLERPEGEVNWYCPNEEGCPAQKRGRILHFASRNALDIQNLGESLVTQLVDRGLVSDAGDLYSLTQEQLAGLDRMAAKSAQNVLDALEKSKKQSYARLLFALGIRHVGAATARELAHACPSIDRLREMDEEALAAVPDIGPVIAASIRDFFAKPWVQAMLQKLAEAGLPMQAGEEKALVNNNFEGQSVIFTGALERHVRQEAEEMVRERGGRIVSSVSKKTTLVVAGKEAGSKLEKAIKLGVKVIDEDEFERML.

Residues 34 to 38 (DFEFD), 83 to 84 (SL), and Glu-117 contribute to the NAD(+) site. Lys-119 (N6-AMP-lysine intermediate) is an active-site residue. Residues Arg-140, Glu-184, Lys-297, and Lys-321 each contribute to the NAD(+) site. Positions 415, 418, 433, and 439 each coordinate Zn(2+). The BRCT domain maps to 598–674 (LVNNNFEGQS…IDEDEFERML (77 aa)).

It belongs to the NAD-dependent DNA ligase family. LigA subfamily. Requires Mg(2+) as cofactor. The cofactor is Mn(2+).

It carries out the reaction NAD(+) + (deoxyribonucleotide)n-3'-hydroxyl + 5'-phospho-(deoxyribonucleotide)m = (deoxyribonucleotide)n+m + AMP + beta-nicotinamide D-nucleotide.. Functionally, DNA ligase that catalyzes the formation of phosphodiester linkages between 5'-phosphoryl and 3'-hydroxyl groups in double-stranded DNA using NAD as a coenzyme and as the energy source for the reaction. It is essential for DNA replication and repair of damaged DNA. This chain is DNA ligase, found in Chlorobaculum tepidum (strain ATCC 49652 / DSM 12025 / NBRC 103806 / TLS) (Chlorobium tepidum).